Reading from the N-terminus, the 323-residue chain is Zinc finger C2HC domain-containing protein 1A (323 aa).

Residues 7–36 form a C2HC/C3H-type 1 zinc finger; that stretch reads ELRPCKICGRTFFPATLKKHVPICQKTSVK. Positions 11, 14, 26, and 30 each coordinate Zn(2+). Residues 35–75 form a disordered region; that stretch reads VKKRKTFESSRQRAEGTDINTVKPVKPRPEPPKKQSNWKRK. Positions 40–50 are enriched in basic and acidic residues; the sequence is TFESSRQRAEG. The segment at 110 to 139 adopts a C2HC/C3H-type 2 zinc-finger fold; sequence DYVQCPYCQRRFNQNAADRHINFCKEQSAR. The Zn(2+) site is built by C114, C117, H129, and C133. A disordered region spans residues 138–273; that stretch reads ARMGQKIKGG…EAAMGYDSSD (136 aa). Polar residues predominate over residues 208–226; that stretch reads KYQTQSPAHKNSTMVTSPQ.

It belongs to the ZC2HC1 family. Zn(2+) is required as a cofactor.

The protein is Zinc finger C2HC domain-containing protein 1A (zc2hc1a) of Xenopus laevis (African clawed frog).